The sequence spans 941 residues: Protein BREAST CANCER SUSCEPTIBILITY 1 homolog (941 aa).

The segment at 16-54 (CPICLSLYNSAVSLSCNHVFCNACIVKSMKMDATCPVCK) adopts an RING-type zinc-finger fold. Disordered regions lie at residues 87-282 (FVSQ…ILPS) and 303-528 (KVKV…GKDD). Composition is skewed to basic and acidic residues over residues 96–115 (SDKE…DKNR) and 125–136 (KRNEYGKTKEID). The span at 157-173 (LLQNLSAESLTKPTESV) shows a compositional bias: polar residues. Over residues 175–196 (TAEKPKDYTENTVIRLDEHPSL) the composition is skewed to basic and acidic residues. Positions 216 to 236 (NSSQRTESDQLLGTTPVNVPS) are enriched in polar residues. Residues 242–255 (DSDHESPSKEDEQQ) show a composition bias toward basic and acidic residues. A Nuclear localization signal 1 motif is present at residues 298–305 (QKKLPKVK). Composition is skewed to polar residues over residues 329–357 (GVSQ…SGTI) and 376–391 (SKAQ…NVSN). Composition is skewed to basic and acidic residues over residues 428–453 (GKGD…EKPS) and 477–487 (KTSEKKLKLDS). The Nuclear localization signal 2 signature appears at 444 to 451 (EKRSPTEK). The span at 489-498 (MISSKATQPH) shows a compositional bias: polar residues. Over residues 512-528 (DKQDSRNNRKSTVGKDD) the composition is skewed to basic and acidic residues. A C2HC pre-PHD-type zinc finger spans residues 561-612 (KFTCAFCQCSEDTEASGEMTHYYRGEPVSADFNGGSKVIHVHKNCAEWAPNV). Residues 632–681 (ISCSCCGLKGAALGCYNKSCKNSFHVTCAKLIPECRWDNVKFVMLCPLDA) form a PHD-type; degenerate zinc finger. BRCT domains follow at residues 724–819 (KQFH…PYEI) and 840–941 (KKPK…LVLI).

As to quaternary structure, forms heterodimer with BARD1/ROW1. As to expression, expressed ubiquitously with highest levels in flower buds. Mostly expressed in flowers and siliques, and, to a lower extent, in roots, rosette leaves, inflorescence and young cauline leaves.

Its subcellular location is the nucleus. Its function is as follows. Plays a role in DNA repair and in cell-cycle control. Required for the repair of DNA double-strand breaks (DSBs), both natural and induced by genotoxic stress, by homologous recombination (HR). This Arabidopsis thaliana (Mouse-ear cress) protein is Protein BREAST CANCER SUSCEPTIBILITY 1 homolog.